The primary structure comprises 139 residues: Nucleoside diphosphate kinase (139 aa).

ATP contacts are provided by Lys-11, Phe-59, Arg-87, Thr-93, Arg-104, and Asn-114. The active-site Pros-phosphohistidine intermediate is the His-117.

This sequence belongs to the NDK family. In terms of assembly, homotetramer. It depends on Mg(2+) as a cofactor.

Its subcellular location is the cytoplasm. It carries out the reaction a 2'-deoxyribonucleoside 5'-diphosphate + ATP = a 2'-deoxyribonucleoside 5'-triphosphate + ADP. The enzyme catalyses a ribonucleoside 5'-diphosphate + ATP = a ribonucleoside 5'-triphosphate + ADP. Functionally, major role in the synthesis of nucleoside triphosphates other than ATP. The ATP gamma phosphate is transferred to the NDP beta phosphate via a ping-pong mechanism, using a phosphorylated active-site intermediate. This chain is Nucleoside diphosphate kinase, found in Wolbachia pipientis subsp. Culex pipiens (strain wPip).